We begin with the raw amino-acid sequence, 806 residues long: SH3-containing GRB2-like protein 3-interacting protein 1 (806 aa).

Disordered regions lie at residues 1 to 115 (MMEG…ESHK) and 142 to 278 (SIGN…QAAT). 2 stretches are compositionally biased toward basic and acidic residues: residues 16–32 (RKKE…DRDG) and 40–54 (PPYH…EGGK). Serine 78, serine 104, serine 105, serine 107, serine 149, serine 151, serine 156, and serine 169 each carry phosphoserine. Residues threonine 180 and threonine 182 each carry the phosphothreonine modification. Phosphoserine is present on residues serine 236 and phenylalanine 243. Residues 245-260 (TGTPPPLPPKTVPATP) show a composition bias toward pro residues. Residues threonine 247 and threonine 259 each carry the phosphothreonine modification. Serine 265, aspartate 274, serine 287, serine 289, serine 300, serine 316, and serine 319 each carry phosphoserine. Residues 265 to 276 (SPLTVATGNDQA) are compositionally biased toward polar residues. The span at 315–324 (FSDASPEHVT) shows a compositional bias: basic and acidic residues. Positions 315 to 533 (FSDASPEHVT…SRGPSPLTMG (219 aa)) are disordered. Threonine 324, threonine 328, and threonine 335 each carry phosphothreonine. Over residues 335-345 (TPPAASDIPAD) the composition is skewed to low complexity. Alanine 338 bears the Phosphoserine mark. A compositionally biased stretch (pro residues) spans 346 to 369 (SPAPAPPGPTGSAGPPGPPGPRHV). Position 371 is a phosphoserine (serine 371). A compositionally biased stretch (basic and acidic residues) spans 377 to 392 (EVQKKVAEQTFIKDDY). Serine 398 carries the phosphoserine modification. Threonine 409 carries the phosphothreonine modification. The segment covering 436–453 (TSGASSPARPATPLVPCS) has biased composition (low complexity). The segment covering 454–473 (TTPPPPPPRPPSRPKLPPGK) has biased composition (pro residues). 2 stretches are compositionally biased toward low complexity: residues 480–490 (SRPFSPPIHSS) and 497–520 (PLAR…TTPT). Residues serine 484, serine 505, and glycine 533 each carry the phosphoserine modification. An MHD domain is found at 537 to 805 (TLPVAAAFTE…RFAAGKYLAD (269 aa)). Interaction with DPF motifs-containing proteins stretches follow at residues 539-545 (PVAAAFT), 571-573 (SFP), 645-648 (TYYN), and 791-796 (SLIKKR). The necessary and sufficient to mediate interaction with CANX stretch occupies residues 627 to 806 (MPNLMTHLKK…FAAGKYLADN (180 aa)).

In terms of assembly, interacts with proteins essential or regulating the formation of functional clathrin-coated pits. Interacts with CANX. Interacts with AP2A1. Interacts with EPS15. Interacts with SH3GL3. Interacts with AMPH. Interacts with ITSN1 (via SH3 domains). Interacts with and REPS1. Detected in brain, spinal cord and cerebellum.

The protein localises to the membrane. Its subcellular location is the clathrin-coated pit. May function in clathrin-mediated endocytosis. Has both a membrane binding/tubulating activity and the ability to recruit proteins essential to the formation of functional clathrin-coated pits. Has a preference for membranes enriched in phosphatidylserine and phosphoinositides and is required for the endocytosis of the transferrin receptor. May also bind tubulin. May play a role in the regulation of energy homeostasis. In Mus musculus (Mouse), this protein is SH3-containing GRB2-like protein 3-interacting protein 1 (Sgip1).